The following is a 186-amino-acid chain: ADP-ribosylation factor-like protein alp41 (186 aa).

Glycine 2 is lipidated: N-myristoyl glycine. GTP contacts are provided by residues 23 to 30 (GLDNAGKT), 66 to 70 (DIGGQ), and 125 to 128 (NKSD).

This sequence belongs to the small GTPase superfamily. Arf family.

It localises to the cytoplasm. The protein resides in the cytoskeleton. Its function is as follows. Has a role in the cofactor-dependent pathway of microtubule biogenesis. Required for growth polarity control. The sequence is that of ADP-ribosylation factor-like protein alp41 (alp41) from Schizosaccharomyces pombe (strain 972 / ATCC 24843) (Fission yeast).